A 596-amino-acid polypeptide reads, in one-letter code: Beta-glucuronidase (596 aa).

The D-glucuronate site is built by aspartate 168 and asparagine 412. Glutamate 413 functions as the Proton donor in the catalytic mechanism. The D-glucuronate site is built by asparagine 464, tyrosine 470, glutamate 502, tryptophan 547, and lysine 566. The active-site Nucleophile is the glutamate 502. The N-K motif motif lies at 564–566 (NKK).

Belongs to the glycosyl hydrolase 2 family.

It is found in the cytoplasm. It catalyses the reaction a beta-D-glucuronoside + H2O = D-glucuronate + an alcohol. Displays beta-glucuronidase activity with the artificial substrate p-nitrophenyl-beta-D-glucuronide (PNPG). Is probably involved in the metabolism of oligosaccharides containing the 3-O-beta-D-glucopyranosyl-beta-D-glucuronide structure released from bacterial and plant acidic carbohydrates. This chain is Beta-glucuronidase, found in Paenibacillus borealis.